The chain runs to 101 residues: Interleukin-8 (101 aa).

The N-terminal stretch at 1 to 22 (MTSKLAVALLAAFVLSAALCEA) is a signal peptide. At Arg27 the chain carries Citrulline. 2 cysteine pairs are disulfide-bonded: Cys34-Cys61 and Cys36-Cys77.

The protein belongs to the intercrine alpha (chemokine CxC) family. As to quaternary structure, homodimer. Interacts with TNFAIP6 (via Link domain); this interaction interferes with chemokine binding to glycosaminoglycans. In terms of processing, citrullination at Arg-27 prevents proteolysis, and dampens tissue inflammation, it also enhances leukocytosis, possibly through impaired chemokine clearance from the blood circulation.

Its subcellular location is the secreted. In terms of biological role, chemotactic factor that mediates inflammatory response by attracting neutrophils, basophils, and T-cells to clear pathogens and protect the host from infection. Also plays an important role in neutrophil activation. Released in response to an inflammatory stimulus, exerts its effect by binding to the G-protein-coupled receptors CXCR1 and CXCR2, primarily found in neutrophils, monocytes and endothelial cells. G-protein heterotrimer (alpha, beta, gamma subunits) constitutively binds to CXCR1/CXCR2 receptor and activation by IL8 leads to beta and gamma subunits release from Galpha (GNAI2 in neutrophils) and activation of several downstream signaling pathways including PI3K and MAPK pathways. The polypeptide is Interleukin-8 (CXCL8) (Canis lupus familiaris (Dog)).